Reading from the N-terminus, the 316-residue chain is 4-diphosphocytidyl-2-C-methyl-D-erythritol kinase (316 aa).

The active site involves lysine 23. 108 to 118 (PVAGGMAGGSA) is an ATP binding site. Residue aspartate 150 is part of the active site.

It belongs to the GHMP kinase family. IspE subfamily.

It catalyses the reaction 4-CDP-2-C-methyl-D-erythritol + ATP = 4-CDP-2-C-methyl-D-erythritol 2-phosphate + ADP + H(+). Its pathway is isoprenoid biosynthesis; isopentenyl diphosphate biosynthesis via DXP pathway; isopentenyl diphosphate from 1-deoxy-D-xylulose 5-phosphate: step 3/6. Functionally, catalyzes the phosphorylation of the position 2 hydroxy group of 4-diphosphocytidyl-2C-methyl-D-erythritol. This chain is 4-diphosphocytidyl-2-C-methyl-D-erythritol kinase, found in Mycobacterium avium (strain 104).